Reading from the N-terminus, the 825-residue chain is Transcription regulator galc (825 aa).

The disordered stretch occupies residues 60 to 102 (RPGPYPYQSSSSSSRELSGSAAKVAIPRTTSASSQSQRRRSAR). Residues 68–79 (SSSSSSRELSGS) are compositionally biased toward low complexity. The segment at residues 104 to 131 (CEPCRQRKIKCDGSKPVCRQCIDHNVSC) is a DNA-binding region (zn(2)-C6 fungal-type). The segment covering 239–251 (DEAKSRNRKKEDS) has biased composition (basic and acidic residues). Disordered stretches follow at residues 239–267 (DEAK…MTPP), 642–663 (APGD…SRRI), and 804–825 (HLRD…ERHH).

The protein resides in the nucleus. In terms of biological role, transcription factor that negatively regulates the biosynthesis of ochratoxin A (OTA), a mycotoxin composed of a chlorinated type I polyketide dihydroisocoumarin moiety linked to L-phenylalanine, and demonstrated to have nephrotoxic, immunotoxic, genotoxic, neurotoxic, and teratogenic properties. Also regulates cellular redox homeostasis and sensitivity to H(2)O(2). Carbon sources such as sucrose, glucose and arabinose repress gal4, leading to up-regulation of OTA biosynthetic genes and altered cellular redox homeostasis. This is Transcription regulator galc from Aspergillus niger (strain ATCC MYA-4892 / CBS 513.88 / FGSC A1513).